A 561-amino-acid chain; its full sequence is Bifunctional NAD(P)H-hydrate repair enzyme (561 aa).

The tract at residues 1 to 241 is NAD(P)H-hydrate epimerase; it reads MLSRISERCT…WMIAAERMDA (241 aa). Positions 29–235 constitute a YjeF N-terminal domain; sequence LRDAEPAAAA…SLGLEEWMIA (207 aa). The interval 77–81 is NADPHX 1; for epimerase activity; it reads NNGGD. 2 residues coordinate K(+): N78 and D145. The interval 149–155 is NADPHX 1; for epimerase activity; that stretch reads GTGISGP. 2 residues coordinate (6S)-NADPHX: Y160 and D178. S181 serves as a coordination point for K(+). The region spanning 249-548 is the YjeF C-terminal domain; it reads LGDVYGYFST…PRIPFIVNAS (300 aa). An ADP-dependent (S)-NAD(P)H-hydrate dehydratase region spans residues 249–561; that stretch reads LGDVYGYFST…SATQQRPSGL (313 aa). Position 351 (G351) interacts with (6S)-NADPHX. Residues 417 to 423 form an NADPHX 2; for dehydratase activity region; that stretch reads HPGEAAR. ADP contacts are provided by residues 454–458 and 475–484; these read KGPGT and NAGMASGGMG. (6S)-NADPHX is bound at residue D485.

This sequence in the N-terminal section; belongs to the NnrE/AIBP family. The protein in the C-terminal section; belongs to the NnrD/CARKD family. It depends on K(+) as a cofactor.

It carries out the reaction (6S)-NADHX + ADP = AMP + phosphate + NADH + H(+). It catalyses the reaction (6S)-NADPHX + ADP = AMP + phosphate + NADPH + H(+). The catalysed reaction is (6R)-NADHX = (6S)-NADHX. The enzyme catalyses (6R)-NADPHX = (6S)-NADPHX. Bifunctional enzyme that catalyzes the epimerization of the S- and R-forms of NAD(P)HX and the dehydration of the S-form of NAD(P)HX at the expense of ADP, which is converted to AMP. This allows the repair of both epimers of NAD(P)HX, a damaged form of NAD(P)H that is a result of enzymatic or heat-dependent hydration. The sequence is that of Bifunctional NAD(P)H-hydrate repair enzyme from Leishmania braziliensis.